We begin with the raw amino-acid sequence, 704 residues long: DNA ligase (704 aa).

NAD(+) contacts are provided by residues 43–47, 92–93, and glutamate 124; these read DADYD and SL. Catalysis depends on lysine 126, which acts as the N6-AMP-lysine intermediate. Positions 147, 182, 298, and 322 each coordinate NAD(+). Zn(2+)-binding residues include cysteine 427, cysteine 430, cysteine 445, and cysteine 451. A BRCT domain is found at 625–704; it reads PVASPVAGRI…DGWLRLIGDA (80 aa).

It belongs to the NAD-dependent DNA ligase family. LigA subfamily. Mg(2+) serves as cofactor. The cofactor is Mn(2+).

It carries out the reaction NAD(+) + (deoxyribonucleotide)n-3'-hydroxyl + 5'-phospho-(deoxyribonucleotide)m = (deoxyribonucleotide)n+m + AMP + beta-nicotinamide D-nucleotide.. Its function is as follows. DNA ligase that catalyzes the formation of phosphodiester linkages between 5'-phosphoryl and 3'-hydroxyl groups in double-stranded DNA using NAD as a coenzyme and as the energy source for the reaction. It is essential for DNA replication and repair of damaged DNA. This chain is DNA ligase, found in Cereibacter sphaeroides (strain KD131 / KCTC 12085) (Rhodobacter sphaeroides).